The sequence spans 221 residues: GTP cyclohydrolase III (221 aa).

The protein belongs to the archaeal-type GTP cyclohydrolase family.

It carries out the reaction GTP + 3 H2O = 2-amino-5-formylamino-6-(5-phospho-D-ribosylamino)pyrimidin-4(3H)-one + 2 phosphate + 2 H(+). Catalyzes the formation of 2-amino-5-formylamino-6-ribofuranosylamino-4(3H)-pyrimidinone ribonucleotide monophosphate and inorganic phosphate from GTP. Also has an independent pyrophosphate phosphohydrolase activity. This Pyrobaculum calidifontis (strain DSM 21063 / JCM 11548 / VA1) protein is GTP cyclohydrolase III.